Reading from the N-terminus, the 375-residue chain is Putative monooxygenase Rv1533 (375 aa).

FMN contacts are provided by residues Q190, G195, G224, and 243 to 246; that span reads WCGS.

The protein belongs to the nitronate monooxygenase family. FMN is required as a cofactor.

The polypeptide is Putative monooxygenase Rv1533 (Mycobacterium tuberculosis (strain ATCC 25618 / H37Rv)).